The following is a 66-amino-acid chain: Large ribosomal subunit protein bL35 (66 aa).

The protein belongs to the bacterial ribosomal protein bL35 family.

The chain is Large ribosomal subunit protein bL35 from Treponema denticola (strain ATCC 35405 / DSM 14222 / CIP 103919 / JCM 8153 / KCTC 15104).